A 519-amino-acid polypeptide reads, in one-letter code: Cytochrome P450 709B1 (519 aa).

Residues 1 to 21 traverse the membrane as a helical segment; the sequence is MGLVIFLALIVLILIIGLRIF. Cys464 serves as a coordination point for heme.

It belongs to the cytochrome P450 family. Heme serves as cofactor. In terms of tissue distribution, highly expressed in siliques.

Its subcellular location is the membrane. Involved in stress response. Does not function as cytokinin hydroxylase in yeast heterologous system. The protein is Cytochrome P450 709B1 of Arabidopsis thaliana (Mouse-ear cress).